The chain runs to 478 residues: Ribosomal RNA small subunit methyltransferase F (478 aa).

S-adenosyl-L-methionine is bound by residues 123–129, E147, D174, and D192; that span reads AAAPGSK. Catalysis depends on C245, which acts as the Nucleophile.

It belongs to the class I-like SAM-binding methyltransferase superfamily. RsmB/NOP family.

The protein localises to the cytoplasm. It carries out the reaction cytidine(1407) in 16S rRNA + S-adenosyl-L-methionine = 5-methylcytidine(1407) in 16S rRNA + S-adenosyl-L-homocysteine + H(+). Specifically methylates the cytosine at position 1407 (m5C1407) of 16S rRNA. In Vibrio campbellii (strain ATCC BAA-1116), this protein is Ribosomal RNA small subunit methyltransferase F.